The following is a 502-amino-acid chain: MLDLTYELPKPKVIAGAKHDWELVIGMEVHAQVSSNAKLFSGASTQFGAEPNSNVAFVDAAMPGMLPVINEYCVEQAVRTGLGLKADINLWSAFDRKNYFYPDLPQGYQISQLYHPIVGEGEVLVELGDGTARMVRIERIHMEQDAGKSIHDMDPSMSFVDLNRTGVCLMEIVSRPDIRGPEEAAAYIAKLRQIMRYLGTCDGNMQNGNLRADVNVSICRPGAYEKYQETQDFSHLGTRCEIKNMNSMRFIQQAIEVEARRQIAIVEAGGEVEQETRLYDPDKGETRSMRSKEEAHDYRYFPDPDLLPLEIEQAWVDDIKSKLPELPDEKKARFIKDFGLTDYDASVLTADLESAHYFDAVAKGRSGKLAANWVINELFGRLKKDDKDITDSPVSPAQLGGVIDLIASDAISGKIAKDLFEIVYTEGGDPAQIVEERGMKQVTDTGAIEAALDEIIAANPAQVEKAKENPKLAGWFVGQVMKATGGKANPKAVNQLVAKKLG.

It belongs to the GatB/GatE family. GatB subfamily. Heterotrimer of A, B and C subunits.

It carries out the reaction L-glutamyl-tRNA(Gln) + L-glutamine + ATP + H2O = L-glutaminyl-tRNA(Gln) + L-glutamate + ADP + phosphate + H(+). The enzyme catalyses L-aspartyl-tRNA(Asn) + L-glutamine + ATP + H2O = L-asparaginyl-tRNA(Asn) + L-glutamate + ADP + phosphate + 2 H(+). In terms of biological role, allows the formation of correctly charged Asn-tRNA(Asn) or Gln-tRNA(Gln) through the transamidation of misacylated Asp-tRNA(Asn) or Glu-tRNA(Gln) in organisms which lack either or both of asparaginyl-tRNA or glutaminyl-tRNA synthetases. The reaction takes place in the presence of glutamine and ATP through an activated phospho-Asp-tRNA(Asn) or phospho-Glu-tRNA(Gln). This is Aspartyl/glutamyl-tRNA(Asn/Gln) amidotransferase subunit B from Ruegeria sp. (strain TM1040) (Silicibacter sp.).